An 860-amino-acid polypeptide reads, in one-letter code: Beta-glucosidase A (860 aa).

The N-terminal stretch at 1-19 (MRFTLIEAVALTAVSLASA) is a signal peptide. N-linked (GlcNAc...) asparagine glycosylation is found at Asn61, Asn211, and Asn252. The active site involves Asp280. Residues Asn315, Asn322, Asn354, Asn387, Asn442, Asn523, Asn542, Asn564, Asn658, Asn690, and Asn712 are each glycosylated (N-linked (GlcNAc...) asparagine). The interval 719 to 753 (SSGDASYGQDSSDYLPEGATDGSAQPILPAGGGPG) is disordered.

Belongs to the glycosyl hydrolase 3 family.

The protein localises to the secreted. It carries out the reaction Hydrolysis of terminal, non-reducing beta-D-glucosyl residues with release of beta-D-glucose.. It functions in the pathway glycan metabolism; cellulose degradation. In terms of biological role, beta-glucosidases are one of a number of cellulolytic enzymes involved in the degradation of cellulosic biomass. Catalyzes the last step releasing glucose from the inhibitory cellobiose. The chain is Beta-glucosidase A (bglA) from Aspergillus kawachii (strain NBRC 4308) (White koji mold).